The following is a 289-amino-acid chain: ATP phosphoribosyltransferase (289 aa).

It belongs to the ATP phosphoribosyltransferase family. Long subfamily. Mg(2+) is required as a cofactor.

It is found in the cytoplasm. The enzyme catalyses 1-(5-phospho-beta-D-ribosyl)-ATP + diphosphate = 5-phospho-alpha-D-ribose 1-diphosphate + ATP. Its pathway is amino-acid biosynthesis; L-histidine biosynthesis; L-histidine from 5-phospho-alpha-D-ribose 1-diphosphate: step 1/9. Its activity is regulated as follows. Feedback inhibited by histidine. Its function is as follows. Catalyzes the condensation of ATP and 5-phosphoribose 1-diphosphate to form N'-(5'-phosphoribosyl)-ATP (PR-ATP). Has a crucial role in the pathway because the rate of histidine biosynthesis seems to be controlled primarily by regulation of HisG enzymatic activity. The sequence is that of ATP phosphoribosyltransferase from Methanosarcina barkeri (strain Fusaro / DSM 804).